We begin with the raw amino-acid sequence, 128 residues long: Neuromedin-S (128 aa).

A signal peptide spans 1-27; the sequence is MRSEKHLLPLPPLLAICCLGTLHLSSG. 2 propeptides span residues 28 to 72 and 75 to 100; these read FPQS…HEIY and FLFQ…AEYT. Asn-119 carries the asparagine amide modification. Residues 123–128 constitute a propeptide that is removed on maturation; it reads VSINEH.

The protein belongs to the NmU family. In terms of tissue distribution, expressed by the skin glands.

Its subcellular location is the secreted. In terms of biological role, neuromedin-S-17: stimulates uterine smooth muscle contraction (B similarity). Synthetic peptide NmS-17 induces calcium mobilization in CHO cells transfected with either human FM-3/GPR66 (EC(50)=0.085 nM) or FM-4/TGR-1 (EC(50)=0.231 nM) NmU/NmS receptors. The sequence is that of Neuromedin-S (nms) from Bombina variegata (Yellow-bellied toad).